The following is a 304-amino-acid chain: Histone H1.8 (304 aa).

Over residues 1–24 the composition is skewed to low complexity; that stretch reads MAPGSVSSVSSSSFPSRDTSPSGS. 3 disordered regions span residues 1–38, 110–248, and 270–304; these read MAPGSVSSVSSSSFPSRDTSPSGSCGLPGADKPGPSCR, SKAK…NSVA, and TVQETKVPTPSQDIGHKVQPIPRVRKAKTPENTQA. The H15 domain occupies 45–123; sequence RNPTMLHMVL…GATGSFKLVP (79 aa). Positions 132–144 are enriched in low complexity; that stretch reads APKAGRGAAGAKE. Basic and acidic residues-rich tracts occupy residues 153–166, 189–202, and 225–237; these read LKKDQVGKATMEKG, KPKEVRKAPLKQDK, and ANAHGKTKGEKSK. The short motif at 154–170 is the Nuclear localization signal element; that stretch reads KKDQVGKATMEKGQKRR. Over residues 270 to 281 the composition is skewed to polar residues; that stretch reads TVQETKVPTPSQ.

It belongs to the histone H1/H5 family. Oocyte-specific.

The protein resides in the cytoplasm. Its subcellular location is the nucleus. It localises to the chromosome. In terms of biological role, may play a key role in the control of gene expression during oogenesis and early embryogenesis, presumably through the perturbation of chromatin structure. Essential for meiotic maturation of germinal vesicle-stage oocytes. The somatic type linker histone H1c is rapidly replaced by H1oo in a donor nucleus transplanted into an oocyte. The greater mobility of H1oo as compared to H1c may contribute to this rapid replacement and increased instability of the embryonic chromatin structure. The rapid replacement of H1c with H1oo may play an important role in nuclear remodeling. In Mus musculus (Mouse), this protein is Histone H1.8.